The sequence spans 127 residues: Ribonuclease P protein component 1 (127 aa).

Belongs to the eukaryotic/archaeal RNase P protein component 1 family. Consists of a catalytic RNA component and at least 4-5 protein subunits.

The protein resides in the cytoplasm. It catalyses the reaction Endonucleolytic cleavage of RNA, removing 5'-extranucleotides from tRNA precursor.. In terms of biological role, part of ribonuclease P, a protein complex that generates mature tRNA molecules by cleaving their 5'-ends. This is Ribonuclease P protein component 1 from Pyrococcus abyssi (strain GE5 / Orsay).